The sequence spans 132 residues: Z-ring associated protein G (132 aa).

Residues 1-21 form a helical membrane-spanning segment; the sequence is MTWEYALIGLVVGIIIGAVAM. The interval 95 to 132 is disordered; the sequence is FRNRLAESEASNDQAPVQMPRDYSEGASGLLRTGAKRD.

Belongs to the ZapG family.

The protein localises to the cell inner membrane. In terms of biological role, involved in cell division, cell envelope biogenesis and cell shape maintenance. The chain is Z-ring associated protein G from Escherichia coli O157:H7.